The chain runs to 527 residues: Transcription factor RBF1 (527 aa).

Disordered stretches follow at residues 1 to 36, 258 to 281, 328 to 365, 395 to 433, and 470 to 527; these read MSSN…IGAS, ANLY…HNEE, HHLL…QQAA, QLSQ…HGLD, and TQGN…SGFL. Residues 160-300 mediate DNA binding; the sequence is HVRDALTTDE…LRMINPQHNH (141 aa). Positions 263–281 are enriched in basic and acidic residues; that stretch reads NEKDQKRKNKPDEPGHNEE. Composition is skewed to low complexity over residues 332 to 365 and 395 to 428; these read QQEQ…QQAA and QLSQ…PQQT.

This sequence belongs to the RBF1 family.

The protein resides in the nucleus. The protein localises to the chromosome. It is found in the telomere. Functionally, transcriptional activator that binds to the RPG box and to telomeres. Involved in the regulation of the transition between yeast and filamentous forms and plays a role in virulence. Induces expression of HWP1, a major hyphal cell protein and virulence factor. The sequence is that of Transcription factor RBF1 (RBF1) from Candida albicans (Yeast).